Reading from the N-terminus, the 114-residue chain is MGNNKKDSNSNYPFASPEGEAGVQLVPKLDTPKMYKVILLNDDYTPMDFVVLVLRRFFAKTEEQATEIMLDVHKKGAGVAGVFSLEIAEMKVMQVNQFAQLNQYPLKSTLEEEA.

The protein belongs to the ClpS family. As to quaternary structure, binds to the N-terminal domain of the chaperone ClpA.

In terms of biological role, involved in the modulation of the specificity of the ClpAP-mediated ATP-dependent protein degradation. This Bdellovibrio bacteriovorus (strain ATCC 15356 / DSM 50701 / NCIMB 9529 / HD100) protein is ATP-dependent Clp protease adapter protein ClpS.